The chain runs to 150 residues: Arginine repressor (150 aa).

The protein belongs to the ArgR family.

It is found in the cytoplasm. It functions in the pathway amino-acid biosynthesis; L-arginine biosynthesis [regulation]. Functionally, regulates arginine biosynthesis genes. The chain is Arginine repressor from Clostridium botulinum (strain Eklund 17B / Type B).